The primary structure comprises 194 residues: Protein ORF31 (194 aa).

A signal peptide spans 1 to 25 (MKSVASPLCQFHGVFCLYQCRQCLA).

This sequence belongs to the herpesviridae UL92 family. Interacts with ORF34.

Its subcellular location is the host nucleus. The protein localises to the host cytoplasm. Plays an important role in the expression of late genes. May play a role in viral replication. The chain is Protein ORF31 (ORF31) from Homo sapiens (Human).